Here is a 267-residue protein sequence, read N- to C-terminus: Putative transcription factor Ovo-like 1 (267 aa).

4 C2H2-type zinc fingers span residues 118-140, 146-168, 174-197, and 213-235; these read FTCR…MKCH, HLCT…VRTH, YKCS…KKIH, and YVCE…LKEH.

As to expression, expressed in fetal kidney, and also in adult pancreas and placenta. Not expressed in intestine, peripheral blood lymphocytes and ovary.

It is found in the nucleus. Putative transcription factor. Involved in hair formation and spermatogenesis. May function in the differentiation and/or maintenance of the urogenital system. The chain is Putative transcription factor Ovo-like 1 (OVOL1) from Homo sapiens (Human).